Reading from the N-terminus, the 761-residue chain is Probable beta-galactosidase 2 (761 aa).

Positions 1 to 23 (MGTIKNNFQLLWLILLIVVLVNG) are cleaved as a signal peptide. Asn39 and Asn110 each carry an N-linked (GlcNAc...) asparagine glycan. The active-site Proton donor is Glu195. Asn206 carries an N-linked (GlcNAc...) asparagine glycan. Glu267 (nucleophile) is an active-site residue. Asn385, Asn405, Asn438, Asn501, Asn552, Asn553, Asn577, Asn592, Asn642, Asn690, and Asn696 each carry an N-linked (GlcNAc...) asparagine glycan.

Belongs to the glycosyl hydrolase 35 family.

The enzyme catalyses Hydrolysis of terminal non-reducing beta-D-galactose residues in beta-D-galactosides.. In terms of biological role, cleaves beta-linked terminal galactosyl residues from gangliosides, glycoproteins, and glycosaminoglycans. This chain is Probable beta-galactosidase 2 (glb2), found in Dictyostelium discoideum (Social amoeba).